A 272-amino-acid chain; its full sequence is Dermonecrotic toxin LvSicTox-alphaIC1bi (272 aa).

The active site involves His-5. Glu-25 and Asp-27 together coordinate Mg(2+). His-41 acts as the Nucleophile in catalysis. 2 disulfides stabilise this stretch: Cys-45-Cys-51 and Cys-47-Cys-189. Residue Asp-84 participates in Mg(2+) binding.

The protein belongs to the arthropod phospholipase D family. Class II subfamily. The cofactor is Mg(2+). Expressed by the venom gland.

It is found in the secreted. It carries out the reaction an N-(acyl)-sphingosylphosphocholine = an N-(acyl)-sphingosyl-1,3-cyclic phosphate + choline. The enzyme catalyses an N-(acyl)-sphingosylphosphoethanolamine = an N-(acyl)-sphingosyl-1,3-cyclic phosphate + ethanolamine. It catalyses the reaction a 1-acyl-sn-glycero-3-phosphocholine = a 1-acyl-sn-glycero-2,3-cyclic phosphate + choline. The catalysed reaction is a 1-acyl-sn-glycero-3-phosphoethanolamine = a 1-acyl-sn-glycero-2,3-cyclic phosphate + ethanolamine. In terms of biological role, dermonecrotic toxins cleave the phosphodiester linkage between the phosphate and headgroup of certain phospholipids (sphingolipid and lysolipid substrates), forming an alcohol (often choline) and a cyclic phosphate. This toxin acts on sphingomyelin (SM). It may also act on ceramide phosphoethanolamine (CPE), lysophosphatidylcholine (LPC) and lysophosphatidylethanolamine (LPE), but not on lysophosphatidylserine (LPS), and lysophosphatidylglycerol (LPG). It acts by transphosphatidylation, releasing exclusively cyclic phosphate products as second products. Induces dermonecrosis, hemolysis, increased vascular permeability, edema, inflammatory response, and platelet aggregation. The chain is Dermonecrotic toxin LvSicTox-alphaIC1bi from Loxosceles variegata (Recluse spider).